The sequence spans 274 residues: Elongation factor Ts (274 aa).

The tract at residues 79–82 is involved in Mg(2+) ion dislocation from EF-Tu; the sequence is TDFV.

This sequence belongs to the EF-Ts family.

It is found in the cytoplasm. In terms of biological role, associates with the EF-Tu.GDP complex and induces the exchange of GDP to GTP. It remains bound to the aminoacyl-tRNA.EF-Tu.GTP complex up to the GTP hydrolysis stage on the ribosome. In Aster yellows witches'-broom phytoplasma (strain AYWB), this protein is Elongation factor Ts.